The primary structure comprises 325 residues: Cytochrome c1, heme protein, mitochondrial (325 aa).

The N-terminal 84 residues, 1-84 (MAAAAATLRG…AVALHSAVSA (84 aa)), are a transit peptide targeting the mitochondrion. The Mitochondrial intermembrane segment spans residues 85 to 281 (SDLELHPPSY…TFLRWAAEPE (197 aa)). The region spanning 108-209 (TSIRRGFQVY…IVRARHGGED (102 aa)) is the Cytochrome c domain. The heme c site is built by C121, C124, H125, and M244. Residues 282 to 315 (HDHRKRMGLKMLLMMGLLLPLVYAMKRHKWSVLK) traverse the membrane as a helical segment. Residues 316–325 (SRKLAYRPPK) lie on the Mitochondrial matrix side of the membrane.

It belongs to the cytochrome c family. In terms of assembly, component of the ubiquinol-cytochrome c oxidoreductase (cytochrome b-c1 complex, complex III, CIII), a multisubunit enzyme composed of 11 subunits. The complex is composed of 3 respiratory subunits cytochrome b, cytochrome c1 and Rieske protein UQCRFS1, 2 core protein subunits UQCRC1/QCR1 and UQCRC2/QCR2, and 6 low-molecular weight protein subunits UQCRH/QCR6, UQCRB/QCR7, UQCRQ/QCR8, UQCR10/QCR9, UQCR11/QCR10 and subunit 9, the cleavage product of Rieske protein UQCRFS1. The complex exists as an obligatory dimer and forms supercomplexes (SCs) in the inner mitochondrial membrane with NADH-ubiquinone oxidoreductase (complex I, CI) and cytochrome c oxidase (complex IV, CIV), resulting in different assemblies (supercomplex SCI(1)III(2)IV(1) and megacomplex MCI(2)III(2)IV(2)). Interacts with FLVCR2; this interaction occurs in the absence of heme and is disrupted upon heme binding. It depends on heme c as a cofactor.

It is found in the mitochondrion inner membrane. The enzyme catalyses a quinol + 2 Fe(III)-[cytochrome c](out) = a quinone + 2 Fe(II)-[cytochrome c](out) + 2 H(+)(out). Functionally, component of the ubiquinol-cytochrome c oxidoreductase, a multisubunit transmembrane complex that is part of the mitochondrial electron transport chain which drives oxidative phosphorylation. The respiratory chain contains 3 multisubunit complexes succinate dehydrogenase (complex II, CII), ubiquinol-cytochrome c oxidoreductase (cytochrome b-c1 complex, complex III, CIII) and cytochrome c oxidase (complex IV, CIV), that cooperate to transfer electrons derived from NADH and succinate to molecular oxygen, creating an electrochemical gradient over the inner membrane that drives transmembrane transport and the ATP synthase. The cytochrome b-c1 complex catalyzes electron transfer from ubiquinol to cytochrome c, linking this redox reaction to translocation of protons across the mitochondrial inner membrane, with protons being carried across the membrane as hydrogens on the quinol. In the process called Q cycle, 2 protons are consumed from the matrix, 4 protons are released into the intermembrane space and 2 electrons are passed to cytochrome c. Cytochrome c1 is a catalytic core subunit containing a c-type heme. It transfers electrons from the [2Fe-2S] iron-sulfur cluster of the Rieske protein to cytochrome c. This is Cytochrome c1, heme protein, mitochondrial (CYC1) from Bos taurus (Bovine).